Consider the following 552-residue polypeptide: MAEKQKHDGRVKIGHYVLGDTLGVGTFGKVKIGEHQLTGHKVAVKILNRQKIRSLDVVGKIKREIQNLKLFRHPHIIKLYQVISTPTDFFMVMEYVSGGELFDYICKHGRVEEVEARRLFQQILSAVDYCHRHMVVHRDLKPENVLLDAQMNAKIADFGLSNMMSDGEFLRTSCGSPNYAAPEVISGRLYAGPEVDIWSCGVILYALLCGTLPFDDEHVPTLFKKIRGGVFYIPEYLNRSIATLLMHMLQVDPLKRATIKDIREHEWFKQDLPSYLFPEDPSYDANVIDDEAVKEVCEKFECTESEVMNSLYSGDPQDQLAVAYHLIIDNRRIMNQASEFYLASSPPTGSFMDDMAMHIPPGLKPHPERMPPLIADSPKARCPLDALNTTKPKSLAVKKAKWHLGIRSQSKPYDIMAEVYRAMKQLDFEWKVVNAYHLRVRRKNPVTGNYVKMSLQLYLVDNRSYLLDFKSIDDEVVEQRSGSSTPQRSCSAAGLHRPRSSVDSSTAENHSLSGSLTGSLTGSTLSSASPRLGSHTMDFFEMCASLITALAR.

The 253-residue stretch at Tyr16 to Phe268 folds into the Protein kinase domain. ATP-binding positions include Leu22–Val30 and Lys45. Residue Asp139 is the Proton acceptor of the active site. Thr172 carries the phosphothreonine; by LKB1 and CaMKK2 modification. Thr258 bears the Phosphothreonine mark. Residues Glu291–Asp376 are AIS. At Ser377 the chain carries Phosphoserine. Positions Glu478–Leu520 are disordered. Residues Arg480–Cys490 are compositionally biased toward polar residues. Position 491 is a phosphoserine (Ser491). The span at Ser501–His510 shows a compositional bias: polar residues. Residues Ser511–Leu520 are compositionally biased toward low complexity.

Belongs to the protein kinase superfamily. CAMK Ser/Thr protein kinase family. SNF1 subfamily. In terms of assembly, AMPK is a heterotrimer of an alpha catalytic subunit (PRKAA1 or PRKAA2), a beta (PRKAB1 or PRKAB2) and a gamma non-catalytic subunits (PRKAG1, PRKAG2 or PRKAG3). Interacts with FNIP1 and FNIP2. Associates with internalized INSR complexes on Golgi/endosomal membranes; PRKAA2/AMPK2 together with ATIC and HACD3/PTPLAD1 is proposed to be part of a signaling network regulating INSR autophosphorylation and endocytosis. Interacts with DUSP29. Interacts with ARF6. The phosphorylated form at Thr-172 mediated by CamKK2 interacts with ACSS2. The cofactor is Mg(2+). Post-translationally, ubiquitinated. In terms of processing, phosphorylated at Thr-172 by STK11/LKB1 in complex with STE20-related adapter-alpha (STRADA) pseudo kinase and CAB39. Also phosphorylated at Thr-172 by CAMKK2; triggered by a rise in intracellular calcium ions, without detectable changes in the AMP/ATP ratio. CAMKK1 can also phosphorylate Thr-172, but at much lower level. Dephosphorylated by protein phosphatase 2A and 2C (PP2A and PP2C). Phosphorylated by ULK1; leading to negatively regulate AMPK activity and suggesting the existence of a regulatory feedback loop between ULK1 and AMPK. Dephosphorylated by PPM1A and PPM1B at Thr-172 (mediated by STK11/LKB1). In terms of tissue distribution, skeletal muscle, lower levels in liver, heart and kidney.

Its subcellular location is the cytoplasm. The protein resides in the nucleus. It catalyses the reaction L-seryl-[protein] + ATP = O-phospho-L-seryl-[protein] + ADP + H(+). The enzyme catalyses L-threonyl-[protein] + ATP = O-phospho-L-threonyl-[protein] + ADP + H(+). It carries out the reaction L-seryl-[acetyl-CoA carboxylase] + ATP = O-phospho-L-seryl-[acetyl-CoA carboxylase] + ADP + H(+). The catalysed reaction is L-seryl-[3-hydroxy-3-methylglutaryl-coenzyme A reductase] + ATP = O-phospho-L-seryl-[3-hydroxy-3-methylglutaryl-coenzyme A reductase] + ADP + H(+). Its activity is regulated as follows. Activated by phosphorylation on Thr-172. Binding of AMP to non-catalytic gamma subunit (PRKAG1, PRKAG2 or PRKAG3) results in allosteric activation, inducing phosphorylation on Thr-172. AMP-binding to gamma subunit also sustains activity by preventing dephosphorylation of Thr-172. ADP also stimulates Thr-172 phosphorylation, without stimulating already phosphorylated AMPK. ATP promotes dephosphorylation of Thr-172, rendering the enzyme inactive. Under physiological conditions AMPK mainly exists in its inactive form in complex with ATP, which is much more abundant than AMP. Selectively inhibited by compound C (6-[4-(2-Piperidin-1-yl-ethoxy)-phenyl)]-3-pyridin-4-yl-pyyrazolo[1,5-a] pyrimidine. Activated by resveratrol, a natural polyphenol present in red wine, and S17834, a synthetic polyphenol. Salicylate/aspirin directly activates kinase activity, primarily by inhibiting Thr-172 dephosphorylation. Its function is as follows. Catalytic subunit of AMP-activated protein kinase (AMPK), an energy sensor protein kinase that plays a key role in regulating cellular energy metabolism. In response to reduction of intracellular ATP levels, AMPK activates energy-producing pathways and inhibits energy-consuming processes: inhibits protein, carbohydrate and lipid biosynthesis, as well as cell growth and proliferation. AMPK acts via direct phosphorylation of metabolic enzymes, and by longer-term effects via phosphorylation of transcription regulators. Regulates lipid synthesis by phosphorylating and inactivating lipid metabolic enzymes such as ACACA, ACACB, GYS1, HMGCR and LIPE; regulates fatty acid and cholesterol synthesis by phosphorylating acetyl-CoA carboxylase (ACACA and ACACB) and hormone-sensitive lipase (LIPE) enzymes, respectively. Promotes lipolysis of lipid droplets by mediating phosphorylation of isoform 1 of CHKA (CHKalpha2). Regulates insulin-signaling and glycolysis by phosphorylating IRS1, PFKFB2 and PFKFB3. Involved in insulin receptor/INSR internalization. AMPK stimulates glucose uptake in muscle by increasing the translocation of the glucose transporter SLC2A4/GLUT4 to the plasma membrane, possibly by mediating phosphorylation of TBC1D4/AS160. Regulates transcription and chromatin structure by phosphorylating transcription regulators involved in energy metabolism such as CRTC2/TORC2, FOXO3, histone H2B, HDAC5, MEF2C, MLXIPL/ChREBP, EP300, HNF4A, p53/TP53, SREBF1, SREBF2 and PPARGC1A. Acts as a key regulator of glucose homeostasis in liver by phosphorylating CRTC2/TORC2, leading to CRTC2/TORC2 sequestration in the cytoplasm. In response to stress, phosphorylates 'Ser-36' of histone H2B (H2BS36ph), leading to promote transcription. Acts as a key regulator of cell growth and proliferation by phosphorylating FNIP1, TSC2, RPTOR, WDR24 and ATG1/ULK1: in response to nutrient limitation, negatively regulates the mTORC1 complex by phosphorylating RPTOR component of the mTORC1 complex and by phosphorylating and activating TSC2. Also phosphorylates and inhibits GATOR2 subunit WDR24 in response to nutrient limitation, leading to suppress glucose-mediated mTORC1 activation. In response to energetic stress, phosphorylates FNIP1, inactivating the non-canonical mTORC1 signaling, thereby promoting nuclear translocation of TFEB and TFE3, and inducing transcription of lysosomal or autophagy genes. In response to nutrient limitation, promotes autophagy by phosphorylating and activating ATG1/ULK1. In that process, it also activates WDR45/WIPI4. Phosphorylates CASP6, thereby preventing its autoprocessing and subsequent activation. AMPK also acts as a regulator of circadian rhythm by mediating phosphorylation of CRY1, leading to destabilize it. May regulate the Wnt signaling pathway by phosphorylating CTNNB1, leading to stabilize it. Also acts as a regulator of cellular polarity by remodeling the actin cytoskeleton; probably by indirectly activating myosin. Also phosphorylates CFTR, EEF2K, KLC1, NOS3 and SLC12A1. Plays an important role in the differential regulation of pro-autophagy (composed of PIK3C3, BECN1, PIK3R4 and UVRAG or ATG14) and non-autophagy (composed of PIK3C3, BECN1 and PIK3R4) complexes, in response to glucose starvation. Can inhibit the non-autophagy complex by phosphorylating PIK3C3 and can activate the pro-autophagy complex by phosphorylating BECN1. Upon glucose starvation, promotes ARF6 activation in a kinase-independent manner leading to cell migration. Upon glucose deprivation mediates the phosphorylation of ACSS2 at 'Ser-659', which exposes the nuclear localization signal of ACSS2, required for its interaction with KPNA1 and nuclear translocation. Upon stress, regulates mitochondrial fragmentation through phosphorylation of MTFR1L. In Rattus norvegicus (Rat), this protein is 5'-AMP-activated protein kinase catalytic subunit alpha-2 (Prkaa2).